The sequence spans 206 residues: Pyrrolidone-carboxylate peptidase (206 aa).

Residues Glu-76, Cys-139, and His-163 contribute to the active site.

It belongs to the peptidase C15 family. In terms of assembly, homotetramer.

The protein localises to the cytoplasm. The catalysed reaction is Release of an N-terminal pyroglutamyl group from a polypeptide, the second amino acid generally not being Pro.. Removes 5-oxoproline from various penultimate amino acid residues except L-proline. The sequence is that of Pyrrolidone-carboxylate peptidase (pcp) from Pyrococcus horikoshii (strain ATCC 700860 / DSM 12428 / JCM 9974 / NBRC 100139 / OT-3).